The sequence spans 1481 residues: MKTYTYQNTLISKKQLKQLLSWSFTTYDSMQACSLADELKYLGFKYASKAGISISIEDLKVPYNKNLLLKIAHQEINSSEKIYLKGKLTDVERFQKLIDTWNLTSESLKDELVSYFKRYDPLNSVYIMAFSGARGNLSQVRQLVGMRGLMSDPSGELLKLPIKKNFREGLTITDYLMSGYGARKGIIDTALKTANSGYLTRRLIDVAQDIIIREKDCLTKHSCLIINFESNLRIKKSVYEKILGRLLNKSIYDEKTKELIAEVNTQVTPNLIRTLKQKQIKHFYVRSPLTCSLYRSICQKCYGWDLANENLIDIGERIGIIAGQSIGEPGTQLTMRTFHTGGIFTSEIRGTIRSPISGIVKFSKRLKRIPIRTNRGEDVLLTKNAGSLIIIPEEKNSKPVKLELFRNTVVFHKNNQYIQKNAIIAELVDDEKQTRTEIKPVLTTTSGEVFIPRIINKLDNINKTKLLWILSGNVYQAPQHSFLNFYNDYKINKNSYIFRTKLINDFSGFTVFTNSKYNLFQRILQLVSNSCWILPNSKIQKLQSSLNKKPYFLNIKKLKYLIDLKLLNSKYFIEISSNKHFGTLVTNNYQTLTGGIGYYDFRCRDRIISDNKTISYFLPWEPKKKSISLEFLTLLESQFLKSFDILSLILKKNPDLEDCRLAFFPNNFNLHSKVETFSHYSKQTNSLNLAWFSIVKQFPYRSVIWMSEENYELNCDKNLLLVEHGNFISKNFEIVPGIVSKTGGIVMISDKNKLTQEITIKTGSVYEGSLFNYFKNKIFYPGEIILDSLKITQPSFCECFEGRFNDQLLIRPLQVYEVPQFKSLIQIFGTKFQTDLPFNLTNNISYRCKSNKIIKESRNFTIIDNILDVNIRTFAKKQFEIELFSDVKKNHLNFLVSEKLSLNHFILPQLRYTDIQSCLLVQTHQFIDSYTILGYLEVMISKSLEIVQFKSKYKDSKQICLISNEDCRTIPKNSVKNKTIDNLLINNANVNYTGKILMDNDEFVTIQKGRPYFFPNCKNEEAIINTDLIYKPLQSSSFLDNSKLKTNRLVYLNYFDITKGLINQRIHSQDIICKFSKMFIKKNGKLYSSLLAGLINRIAIINKQLDSQQIPSCPTSIRKYREENSSKKLKKRMKRKYKKITGIKTLLFIKNSELNLNPLKDTQDRKNSLTVATFMLSKFYKFTGGIHSITEDYFDEEVNSVFCKNGEFVKNGQTIGLLNFEKEITGDIVQGLPRVEQLLEARKKKQITKNLPINKKKGLLTQTTSIDSYFEFKKLGTSIKENEKINPHNLLKVYFNYYGLIKTFFCENSYTKDSYRLFNNYEASYRSFKKVQSLILNSVQSVYKSQGVSIADKHLEVIIKQMTTKVLITHQGNTSLLPREVIDLYHIEYINKIARIHKKHPALYVPLLLGITKAALNNPSFISAASFQETTRVLTKAAIEGRVDWLRGLKENIIIGHLMPAGTGSPVYTNCFKKSFENNLN.

Cys217, Cys291, Cys298, and Cys301 together coordinate Zn(2+).

Belongs to the RNA polymerase beta' chain family. RpoC2 subfamily. As to quaternary structure, in plastids the minimal PEP RNA polymerase catalytic core is composed of four subunits: alpha, beta, beta', and beta''. When a (nuclear-encoded) sigma factor is associated with the core the holoenzyme is formed, which can initiate transcription. It depends on Zn(2+) as a cofactor.

Its subcellular location is the plastid. The protein localises to the chloroplast. The enzyme catalyses RNA(n) + a ribonucleoside 5'-triphosphate = RNA(n+1) + diphosphate. Functionally, DNA-dependent RNA polymerase catalyzes the transcription of DNA into RNA using the four ribonucleoside triphosphates as substrates. In Trieres chinensis (Marine centric diatom), this protein is DNA-directed RNA polymerase subunit beta''.